Reading from the N-terminus, the 117-residue chain is Thioredoxin (117 aa).

The Thioredoxin domain occupies 2-116; that stretch reads AISLTEEDFV…FENIIKDFFG (115 aa). An intrachain disulfide couples C40 to C43.

Belongs to the thioredoxin family.

Participates in various redox reactions through the reversible oxidation of its active center dithiol to a disulfide and catalyzes dithiol-disulfide exchange reactions. The protein is Thioredoxin (trxA) of Borreliella burgdorferi (strain ATCC 35210 / DSM 4680 / CIP 102532 / B31) (Borrelia burgdorferi).